The sequence spans 202 residues: NAD(P)H dehydrogenase (quinone) 2 (202 aa).

The Flavodoxin-like domain maps to 4-190 (VLVLYYSSYG…AGAFHQGEIV (187 aa)). Residues 10–15 (SSYGHI) and 78–80 (TRF) contribute to the FMN site. An NAD(+)-binding site is contributed by tyrosine 12. Residue tryptophan 98 coordinates substrate. Residues 113-119 (STGTQHG) and histidine 134 contribute to the FMN site.

The protein belongs to the WrbA family. The cofactor is FMN.

It carries out the reaction a quinone + NADH + H(+) = a quinol + NAD(+). The enzyme catalyses a quinone + NADPH + H(+) = a quinol + NADP(+). This chain is NAD(P)H dehydrogenase (quinone) 2, found in Rhizobium meliloti (strain 1021) (Ensifer meliloti).